Consider the following 292-residue polypeptide: Homoserine kinase (292 aa).

80–90 is an ATP binding site; that stretch reads PLARGLGSSSS.

It belongs to the GHMP kinase family. Homoserine kinase subfamily.

Its subcellular location is the cytoplasm. The enzyme catalyses L-homoserine + ATP = O-phospho-L-homoserine + ADP + H(+). Its pathway is amino-acid biosynthesis; L-threonine biosynthesis; L-threonine from L-aspartate: step 4/5. Catalyzes the ATP-dependent phosphorylation of L-homoserine to L-homoserine phosphate. This chain is Homoserine kinase, found in Leuconostoc mesenteroides subsp. mesenteroides (strain ATCC 8293 / DSM 20343 / BCRC 11652 / CCM 1803 / JCM 6124 / NCDO 523 / NBRC 100496 / NCIMB 8023 / NCTC 12954 / NRRL B-1118 / 37Y).